A 253-amino-acid polypeptide reads, in one-letter code: Pre-mRNA-splicing factor SPF27 homolog (253 aa).

A coiled-coil region spans residues 124–235 (KQYLQKNQRS…IDSFKKEAAE (112 aa)).

Belongs to the SPF27 family. In terms of assembly, component of the multiprotein assembly MOS4-associated complex (MAC) at least composed of MOS4, CDC5 and PRL1. Interacts with CYCL1-1 and CDC5. Associated with the spliceosome. Interacts with ENY2.

The protein localises to the nucleus. Functionally, component of the MAC complex that probably regulates defense responses through transcriptional control and thereby is essential for plant innate immunity. Involved in mRNA splicing. This is Pre-mRNA-splicing factor SPF27 homolog (MOS4) from Arabidopsis thaliana (Mouse-ear cress).